A 274-amino-acid polypeptide reads, in one-letter code: TATA box-binding protein-associated factor RNA polymerase I subunit D (274 aa).

The span at 1–19 shows a compositional bias: polar residues; that stretch reads MDSLNYTTACDSAVETENQ. Disordered stretches follow at residues 1-45 and 84-111; these read MDSL…RQRN and NKKR…RTTR. Phosphoserine is present on serine 20. Residues 84-110 are compositionally biased toward basic residues; the sequence is NKKRKRKKKKYKPTGRSVGRPKGRRTT. Serine 132 and serine 229 each carry phosphoserine.

In terms of assembly, component of the transcription factor SL1/TIF-IB complex, composed of TBP and at least TAF1A, TAF1B, TAF1C and TAF1D. Interacts with UBTF.

The protein resides in the nucleus. Component of the transcription factor SL1/TIF-IB complex, which is involved in the assembly of the PIC (preinitiation complex) during RNA polymerase I-dependent transcription. The rate of PIC formation probably is primarily dependent on the rate of association of SL1/TIF-IB with the rDNA promoter. SL1/TIF-IB is involved in stabilization of nucleolar transcription factor 1/UBTF on rDNA. Formation of SL1/TIF-IB excludes the association of TBP with TFIID subunits. The sequence is that of TATA box-binding protein-associated factor RNA polymerase I subunit D (TAF1D) from Bos taurus (Bovine).